The sequence spans 379 residues: NADH-quinone oxidoreductase subunit D 1 (379 aa).

This sequence belongs to the complex I 49 kDa subunit family. As to quaternary structure, NDH-1 is composed of 14 different subunits. Subunits NuoB, C, D, E, F, and G constitute the peripheral sector of the complex.

It localises to the cell inner membrane. The enzyme catalyses a quinone + NADH + 5 H(+)(in) = a quinol + NAD(+) + 4 H(+)(out). In terms of biological role, NDH-1 shuttles electrons from NADH, via FMN and iron-sulfur (Fe-S) centers, to quinones in the respiratory chain. The immediate electron acceptor for the enzyme in this species is believed to be ubiquinone. Couples the redox reaction to proton translocation (for every two electrons transferred, four hydrogen ions are translocated across the cytoplasmic membrane), and thus conserves the redox energy in a proton gradient. The protein is NADH-quinone oxidoreductase subunit D 1 of Anaeromyxobacter sp. (strain K).